A 393-amino-acid chain; its full sequence is S-adenosylmethionine synthase 2 (393 aa).

E9 provides a ligand contact to Mg(2+). H15 is an ATP binding site. K(+) is bound at residue E43. Positions 56 and 99 each coordinate L-methionine. ATP-binding positions include 167–169 (DGK), 235–238 (SGRF), D246, 252–253 (RK), A269, K273, and K277. D246 is an L-methionine binding site. K277 is a binding site for L-methionine.

This sequence belongs to the AdoMet synthase family. Homotetramer. Mn(2+) serves as cofactor. The cofactor is Mg(2+). Requires Co(2+) as cofactor. It depends on K(+) as a cofactor. As to expression, mostly expressed in roots. Also present in stems and leaves.

Its subcellular location is the cytoplasm. The enzyme catalyses L-methionine + ATP + H2O = S-adenosyl-L-methionine + phosphate + diphosphate. It participates in amino-acid biosynthesis; S-adenosyl-L-methionine biosynthesis; S-adenosyl-L-methionine from L-methionine: step 1/1. Functionally, catalyzes the formation of S-adenosylmethionine from methionine and ATP. The reaction comprises two steps that are both catalyzed by the same enzyme: formation of S-adenosylmethionine (AdoMet) and triphosphate, and subsequent hydrolysis of the triphosphate. The sequence is that of S-adenosylmethionine synthase 2 (SAM2) from Solanum lycopersicum (Tomato).